The primary structure comprises 840 residues: MQEQEISFIFKYNEGLCMNIDSDSILMSILDMSLHQQMGSDRDLQSSTSSVSLPSVKKAPKQRRISIGSLFRRKKDSKRKSRELNGGVDGIASIESIHSEMCADKNSIFSTNTSSDNGLTSISKQIGDFIECPLCLLRHSKDRFPDIMTCHHRSCVDCLRQYLRIEISESRVNISCPECTERFNPHDIRLILSDDVLMEKYEEFMLRRWLVADPDCRWCPAPDCGYAVIAFGCASCPKLTCGREGCGTEFCYHCKQIWHPNQTCDAARQERAQSLRLRTIRSSSISYSQESGAAADDIKPCPRCAAYIIKMNDGSCNHMTCAVCGCEFCWLCMKEISDLHYLSPSGCTFWGKKPWSRKKKILWQLGTLVGAPVGIALIAGIAIPAMIIGIPVYVGRKIHNRYEGKDVSKHKRNLAIAGGVTLSVIVSPVVAAVTVGIGVPIMLAYVYGVVPISLCRSGGCGVSAGNGKGVRIEFDDENDINVGGTNAAIDTTSVAEARHNPSIGEGSVGGLTGSLSASGSHMDRIGTIRDNLSETASTMALAGASITGSLSGSAMVNCFNRLEVQADVQKERCSLSGESGTVSLGTVSDNASTKAMAGSILNSYIPLDREGNSMEVQVDIESKPFKFRHNSGSSSVDDSGATRGHTGGASSGLPEGKSSATKWSKEATGGKKSKSGKLRKKGNMKINETREDMDAQLLEQQSTNSSEFEAPSLSDSMPSVADSHSSHFSEFSCSDLESMRTSCSHGSSDCHARFTAVNTLPEVENDRLENSPHQCSSALLSKAASCSDVPQPSHAADEHGTSRSGGKPMVDLCFGDALRETNNNHSHQTADLKVAVQTEI.

The disordered stretch occupies residues 40 to 61 (SDRDLQSSTSSVSLPSVKKAPK). Over residues 45–56 (QSSTSSVSLPSV) the composition is skewed to low complexity. The TRIAD supradomain stretch occupies residues 128–351 (DFIECPLCLL…LSPSGCTFWG (224 aa)). The Zn(2+) site is built by Cys132, Cys135, Cys150, His152, Cys155, Cys158, Cys176, Cys179, Cys219, Cys224, Cys241, Cys246, Cys251, Cys254, His259, Cys264, Cys301, and Cys304. The RING-type 1 zinc-finger motif lies at 132–179 (CPLCLLRHSKDRFPDIMTCHHRSCVDCLRQYLRIEISESRVNISCPEC). The segment at 199–264 (EKYEEFMLRR…KQIWHPNQTC (66 aa)) adopts an IBR-type zinc-finger fold. The RING-type 2; atypical zinc-finger motif lies at 301 to 332 (CPRCAAYIIKMNDGSCNHMTCAVCGCEFCWLC). Residue Cys316 is part of the active site. 6 residues coordinate Zn(2+): Cys321, Cys324, Cys329, Cys332, His340, and Cys347. Helical transmembrane passes span 368-388 (LVGAPVGIALIAGIAIPAMII) and 424-444 (VIVSPVVAAVTVGIGVPIMLA). Disordered regions lie at residues 625 to 685 (FKFR…GNMK), 700 to 721 (QQSTNSSEFEAPSLSDSMPSVA), and 786 to 808 (CSDVPQPSHAADEHGTSRSGGKP). Ser631 carries the phosphoserine modification. Residues 660 to 840 (ATKWSKEATG…DLKVAVQTEI (181 aa)) are interaction with CASR. Basic residues predominate over residues 671–683 (KKSKSGKLRKKGN). Polar residues predominate over residues 700–717 (QQSTNSSEFEAPSLSDSM).

This sequence belongs to the RBR family. RNF19 subfamily. Interacts with UBE2L3 and UBE2L6. Also interacts with transcription factor Sp1. Interacts with SNCAIP and CASR. Interacts with VCP.

Its subcellular location is the membrane. The protein localises to the cytoplasm. The protein resides in the cytoskeleton. It localises to the microtubule organizing center. It is found in the centrosome. The catalysed reaction is [E2 ubiquitin-conjugating enzyme]-S-ubiquitinyl-L-cysteine + [acceptor protein]-L-lysine = [E2 ubiquitin-conjugating enzyme]-L-cysteine + [acceptor protein]-N(6)-ubiquitinyl-L-lysine.. Its pathway is protein modification; protein ubiquitination. Its function is as follows. E3 ubiquitin-protein ligase which accepts ubiquitin from E2 ubiquitin-conjugating enzymes UBE2L3 and UBE2L6 in the form of a thioester and then directly transfers the ubiquitin to targeted substrates, such as SNCAIP or CASR. This chain is E3 ubiquitin-protein ligase RNF19A (Rnf19a), found in Mus musculus (Mouse).